We begin with the raw amino-acid sequence, 106 residues long: Immunoglobulin lambda constant 6 (106 aa).

Residues 7 to 101 enclose the Ig-like domain; sequence PSVTLFPPSS…EGSTVEKTVA (95 aa). The cysteines at positions 28 and 87 are disulfide-linked.

In terms of assembly, immunoglobulins are composed of two identical heavy chains and two identical light chains; disulfide-linked.

The protein localises to the secreted. Its subcellular location is the cell membrane. Its function is as follows. Constant region of immunoglobulin light chains. Immunoglobulins, also known as antibodies, are membrane-bound or secreted glycoproteins produced by B lymphocytes. In the recognition phase of humoral immunity, the membrane-bound immunoglobulins serve as receptors which, upon binding of a specific antigen, trigger the clonal expansion and differentiation of B lymphocytes into immunoglobulins-secreting plasma cells. Secreted immunoglobulins mediate the effector phase of humoral immunity, which results in the elimination of bound antigens. The antigen binding site is formed by the variable domain of one heavy chain, together with that of its associated light chain. Thus, each immunoglobulin has two antigen binding sites with remarkable affinity for a particular antigen. The variable domains are assembled by a process called V-(D)-J rearrangement and can then be subjected to somatic hypermutations which, after exposure to antigen and selection, allow affinity maturation for a particular antigen. This Homo sapiens (Human) protein is Immunoglobulin lambda constant 6.